Consider the following 186-residue polypeptide: MDRLPLELPSSLRQEFKSPFGPVYTDVTQFLTDAGRPIIAVGDIVTYHLQTVDYTPAVAVIDGQTKRESVDETVKAALSKHNKRIDVENQPGTISIALLEALQTAVETPESVMIVVDGEEDLATLPAVLVARPGGTVVYGQPDQGMVRIAVTPETKITMSRLLKRMDGDAAAAFDRLGVDRSGDKK.

Residues Asp-43, Ile-44, Val-45, Asp-62, Glu-120, and Asp-143 each coordinate GTP.

Belongs to the GTP-dependent DPCK family.

The catalysed reaction is 3'-dephospho-CoA + GTP = GDP + CoA + H(+). Its pathway is cofactor biosynthesis; coenzyme A biosynthesis. Its function is as follows. Catalyzes the GTP-dependent phosphorylation of the 3'-hydroxyl group of dephosphocoenzyme A to form coenzyme A (CoA). This Haloquadratum walsbyi (strain DSM 16790 / HBSQ001) protein is GTP-dependent dephospho-CoA kinase.